Consider the following 345-residue polypeptide: D-fructose 1,6-bisphosphatase class 2/sedoheptulose 1,7-bisphosphatase (345 aa).

The Mn(2+) site is built by Asp33, Glu57, Asp97, and Glu100. Substrate is bound by residues 100 to 102 (EGT), Tyr131, 176 to 178 (RPR), and 198 to 200 (DGD). Mn(2+) is bound at residue Glu225.

It belongs to the FBPase class 2 family. Homotetramer. Mn(2+) is required as a cofactor.

It catalyses the reaction beta-D-fructose 1,6-bisphosphate + H2O = beta-D-fructose 6-phosphate + phosphate. The catalysed reaction is D-sedoheptulose 1,7-bisphosphate + H2O = D-sedoheptulose 7-phosphate + phosphate. Its pathway is carbohydrate biosynthesis; Calvin cycle. Inhibited by AMP and slightly innibited by hydrogen peroxyde. In terms of biological role, catalyzes the hydrolysis of fructose 1,6-bisphosphate (Fru 1,6-P2) and sedoheptulose 1,7-bisphosphate (Sed 1,7-P2) to fructose 6-phosphate and sedoheptulose 7-phosphate, respectively. In Synechococcus elongatus (strain ATCC 33912 / PCC 7942 / FACHB-805) (Anacystis nidulans R2), this protein is D-fructose 1,6-bisphosphatase class 2/sedoheptulose 1,7-bisphosphatase.